Consider the following 87-residue polypeptide: Small ribosomal subunit protein bS20 (87 aa).

The protein belongs to the bacterial ribosomal protein bS20 family.

In terms of biological role, binds directly to 16S ribosomal RNA. The chain is Small ribosomal subunit protein bS20 from Lachnoclostridium phytofermentans (strain ATCC 700394 / DSM 18823 / ISDg) (Clostridium phytofermentans).